Reading from the N-terminus, the 456-residue chain is Sulfoacetaldehyde dehydrogenase (456 aa).

G213 to A218 provides a ligand contact to NAD(+). Residues E233 and C267 contribute to the active site.

The protein belongs to the aldehyde dehydrogenase family. In terms of assembly, homotetramer.

The enzyme catalyses sulfoacetaldehyde + NAD(+) + H2O = sulfoacetate + NADH + 2 H(+). Mediates conversion of 2-sulfoacetaldehyde into sulfoacetate. The enzyme is specific for NAD; NADP is not a substrate. Part of a pathway that can utilize the amino group of taurine as a sole source of nitrogen for growth. This is Sulfoacetaldehyde dehydrogenase (safD) from Neptuniibacter caesariensis.